A 478-amino-acid polypeptide reads, in one-letter code: Vitronectin (478 aa).

Residues 1-19 (MAPLRPFFILALVAWVSLA) form the signal peptide. In terms of domain architecture, SMB spans 20–63 (DQESCKGRCTQGFMASKKCQCDELCTYYQSCCADYMEQCKPQVT). Disulfide bonds link Cys-24/Cys-28, Cys-24/Cys-40, Cys-28/Cys-58, Cys-38/Cys-40, Cys-38/Cys-51, Cys-44/Cys-50, and Cys-51/Cys-58. A Cell attachment site motif is present at residues 64–66 (RGD). Phosphothreonine is present on Thr-69. A sulfotyrosine mark is found at Tyr-75, Tyr-78, and Tyr-80. Residues 82-153 (EEPKNNTNTG…QGTPEFPEEE (72 aa)) are disordered. Asn-86 is a glycosylation site (N-linked (GlcNAc...) asparagine). Residues 86–99 (NNTNTGVQPENTSP) show a composition bias toward polar residues. The segment covering 131 to 141 (EQQEEILRPDT) has biased composition (basic and acidic residues). Hemopexin repeat units follow at residues 157–201 (GKPF…VWGI), 202–249 (EGPI…FSGI), and 250–304 (PDNV…FEHF). N-linked (GlcNAc...) asparagine glycosylation is found at Asn-168 and Asn-241. Tyr-278 and Tyr-281 each carry sulfotyrosine. Residues Cys-292 and Cys-431 are joined by a disulfide bond. Phosphoserine is present on residues Ser-311 and Ser-362. The segment at 359–395 (LSHSAQAKKQKSKRRSRKRYRSRRGRGHRRSQSSNSR) is disordered. A compositionally biased stretch (basic residues) spans 364 to 389 (QAKKQKSKRRSRKRYRSRRGRGHRRS). Residues 366–399 (KKQKSKRRSRKRYRSRRGRGHRRSQSSNSRRSSR) are heparin-binding. At Ser-398 the chain carries Phosphoserine; by PKA. Sulfotyrosine occurs at positions 416, 419, and 421. Residues 420–473 (DYDMDWLVPATCEPIQSVYFFSGDKYYRVNLRTRRVDSVNPPYPRSIAQYWLGC) form a Hemopexin 4 repeat.

As to quaternary structure, interacts with SERPINE1/PAI1, insulin and C1QBP. In terms of processing, sulfated on tyrosine residues. Post-translationally, N- and O-glycosylated. It has been suggested that the active SMB domain may be permitted considerable disulfide bond heterogeneity or variability, thus two alternate disulfide patterns based on 3D structures are described with 1 disulfide bond conserved in both. Plasma.

It is found in the secreted. The protein resides in the extracellular space. In terms of biological role, vitronectin is a cell adhesion and spreading factor found in serum and tissues. Vitronectin interact with glycosaminoglycans and proteoglycans. Is recognized by certain members of the integrin family and serves as a cell-to-substrate adhesion molecule. Inhibitor of the membrane-damaging effect of the terminal cytolytic complement pathway. This is Vitronectin (Vtn) from Mus musculus (Mouse).